Consider the following 170-residue polypeptide: Small ribosomal subunit protein bS16 (170 aa).

The interval 114-170 (EGGPTTEAAKPKKKAATSGAKKAAKAAEPEAAAPEAAEPEAAAPAEGGEQAESSTES) is disordered. Residues 142–170 (PEAAAPEAAEPEAAAPAEGGEQAESSTES) are compositionally biased toward low complexity.

It belongs to the bacterial ribosomal protein bS16 family.

This chain is Small ribosomal subunit protein bS16, found in Mycobacterium avium (strain 104).